A 361-amino-acid polypeptide reads, in one-letter code: Probable galacturonosyltransferase-like 7 (361 aa).

Residues 1–21 (MLWIMRFSGLFSAALVIIVLS) form a helical; Signal-anchor for type II membrane protein membrane-spanning segment. Residues 22-361 (PSLQSFPPAE…PYDLYGHYSR (340 aa)) lie on the Lumenal side of the membrane. N-linked (GlcNAc...) asparagine glycosylation is present at N217.

It belongs to the glycosyltransferase 8 family.

It localises to the golgi apparatus membrane. It functions in the pathway glycan metabolism; pectin biosynthesis. In terms of biological role, may be involved in pectin and/or xylans biosynthesis in cell walls. This is Probable galacturonosyltransferase-like 7 (GATL7) from Arabidopsis thaliana (Mouse-ear cress).